Here is a 251-residue protein sequence, read N- to C-terminus: uncharacterized protein (251 aa).

One can recognise a Response regulatory domain in the interval Lys-3 to Val-118. At Asp-55 the chain carries 4-aspartylphosphate. Positions Asn-152–Gln-249 constitute an HTH araC/xylS-type domain. 2 DNA-binding regions (H-T-H motif) span residues Leu-169 to Val-190 and His-216 to Leu-239.

In terms of processing, phosphorylated by SERP2405.

The protein localises to the cytoplasm. Its function is as follows. Probable member of the two-component regulatory system SERP2405/SERP2406. This is an uncharacterized protein from Staphylococcus epidermidis (strain ATCC 35984 / DSM 28319 / BCRC 17069 / CCUG 31568 / BM 3577 / RP62A).